Consider the following 1264-residue polypeptide: Phosphatidylinositol 3,4,5-trisphosphate 5-phosphatase 2 (1264 aa).

The 97-residue stretch at 26-122 (WYHRDLSRAA…GLVCALLLPV (97 aa)) folds into the SH2 domain. Positions 124 to 137 (REREPDPPDDRDVS) are enriched in basic and acidic residues. Residues 124–182 (REREPDPPDDRDVSDGEDEKPPLPPRSGSTSISAPVGPGSPPAAPETPTTPAAESAPNG) are disordered. The residue at position 137 (Ser-137) is a Phosphoserine. Residues 169-180 (ETPTTPAAESAP) are compositionally biased toward low complexity. Position 170 is a phosphothreonine (Thr-170). Phosphoserine occurs at positions 246 and 358. A Phosphotyrosine modification is found at Tyr-892. Ser-896 carries the phosphoserine modification. Residues 903-1123 (GAKSKAPSVS…TFLGEVASGD (221 aa)) form a disordered region. The span at 944 to 954 (PPPTGRPPAPP) shows a compositional bias: pro residues. An SH3-binding motif is present at residues 950–955 (PPAPPR). A compositionally biased stretch (basic and acidic residues) spans 957–971 (ASREEPLTPRLKAEG). Thr-964 bears the Phosphothreonine mark. The NPXY motif signature appears at 989-992 (NPAY). Tyr-992 is modified (phosphotyrosine). 3 stretches are compositionally biased toward pro residues: residues 1002–1017 (LLPPEPPSPARAPVPP), 1054–1065 (LPPPDFPPPPLP), and 1093–1110 (GPPPPKAHPRPPLPPGPS). Position 1137 is a phosphoserine (Ser-1137). The tract at residues 1140–1178 (DYAPAGPGRSVLLPGPLELQPPRGLPSDYGRPLSFPPPR) is disordered. A phosphotyrosine mark is found at Tyr-1141 and Tyr-1168. The SAM domain maps to 1210–1264 (WLRAIGLERYEEGLVHNGWDDLEFLSDITEEDLEEAGVQDPAHKRLLLDTLQLSK). A Phosphoserine modification is found at Ser-1263.

The protein belongs to the inositol 1,4,5-trisphosphate 5-phosphatase family. Interacts with tyrosine phosphorylated form of SHC1. Interacts with EGFR. Upon stimulation by the EGF signaling pathway, it forms a complex with SHC1 and EGFR. Interacts with cytoskeletal protein SORBS3/vinexin, promoting its localization to the periphery of cells. Forms a complex with filamin (FLNA or FLNB), actin, GPIb (GP1BA or GP1BB) that regulates cortical and submembraneous actin. Interacts with c-Met/MET, when c-Met/MET is phosphorylated on 'Tyr-1356'. Interacts with p130Cas/BCAR1. Interacts with CENTD3/ARAP3 via its SAM domain. Interacts with c-Cbl/CBL and CAP/SORBS1. Interacts with activated EPHA2 receptor. Interacts with receptor FCGR2A. Interacts with receptor FCGR2B. Interacts with tyrosine kinase ABL1. Interacts with tyrosine kinase TEC. Interacts with CSF1R. Interacts (via N-terminus) with SH3YL1 (via SH3 domain). Interacts with FCRL6 (tyrosine phosphorylated form). Interacts (via SH2 domain) with tyrosine phosphorylated KLRC1 (via ITIM). Interacts with NEDD9/HEF1. Tyrosine phosphorylated by the members of the SRC family after exposure to a diverse array of extracellular stimuli such as insulin, growth factors such as EGF or PDGF, chemokines, integrin ligands and hypertonic and oxidative stress. May be phosphorylated upon IgG receptor FCGR2B-binding. Phosphorylated at Tyr-992 following cell attachment and spreading. Phosphorylated at Tyr-1168 following EGF signaling pathway stimulation. Phosphorylated at Thr-964 in response to PDGF.

It is found in the cytoplasm. It localises to the cytosol. The protein resides in the membrane. The protein localises to the cell projection. Its subcellular location is the filopodium. It is found in the lamellipodium. It localises to the basal cell membrane. The protein resides in the nucleus. The protein localises to the nucleus speckle. Its subcellular location is the cytoskeleton. It is found in the spindle pole. It carries out the reaction a 1,2-diacyl-sn-glycero-3-phospho-(1D-myo-inositol-3,4,5-trisphosphate) + H2O = a 1,2-diacyl-sn-glycero-3-phospho-(1D-myo-inositol-3,4-bisphosphate) + phosphate. The enzyme catalyses 1,2-dioctanoyl-sn-glycero-3-phospho-(1D-myo-inositol-3,4,5-trisphosphate) + H2O = 1,2-dioctanoyl-sn-glycero-3-phospho-(1D-myo-inositol-3,4-bisphosphate) + phosphate. It catalyses the reaction 1,2-dihexadecanoyl-sn-glycero-3-phospho-(1D-myo-inositol-3,4,5-trisphosphate) + H2O = 1,2-dihexadecanoyl-sn-glycero-3-phospho-(1D-myo-inositol-3,4-bisphosphate) + phosphate. Its activity is regulated as follows. Activated upon translocation to the sites of synthesis of PtdIns(3,4,5)P3 in the membrane. Enzymatic activity is enhanced in the presence of phosphatidylserine. Functionally, phosphatidylinositol (PtdIns) phosphatase that specifically hydrolyzes the 5-phosphate of phosphatidylinositol-3,4,5-trisphosphate (PtdIns(3,4,5)P3) to produce PtdIns(3,4)P2, thereby negatively regulating the PI3K (phosphoinositide 3-kinase) pathways. Required for correct mitotic spindle orientation and therefore progression of mitosis. Plays a central role in regulation of PI3K-dependent insulin signaling, although the precise molecular mechanisms and signaling pathways remain unclear. While overexpression reduces both insulin-stimulated MAP kinase and Akt activation, its absence does not affect insulin signaling or GLUT4 trafficking. Confers resistance to dietary obesity. May act by regulating AKT2, but not AKT1, phosphorylation at the plasma membrane. Part of a signaling pathway that regulates actin cytoskeleton remodeling. Required for the maintenance and dynamic remodeling of actin structures as well as in endocytosis, having a major impact on ligand-induced EGFR internalization and degradation. Participates in regulation of cortical and submembraneous actin by hydrolyzing PtdIns(3,4,5)P3 thereby regulating membrane ruffling. Regulates cell adhesion and cell spreading. Required for HGF-mediated lamellipodium formation, cell scattering and spreading. Acts as a negative regulator of EPHA2 receptor endocytosis by inhibiting via PI3K-dependent Rac1 activation. Acts as a regulator of neuritogenesis by regulating PtdIns(3,4,5)P3 level and is required to form an initial protrusive pattern, and later, maintain proper neurite outgrowth. Acts as a negative regulator of the FC-gamma-RIIA receptor (FCGR2A). Mediates signaling from the FC-gamma-RIIB receptor (FCGR2B), playing a central role in terminating signal transduction from activating immune/hematopoietic cell receptor systems. Involved in EGF signaling pathway. Upon stimulation by EGF, it is recruited by EGFR and dephosphorylates PtdIns(3,4,5)P3. Plays a negative role in regulating the PI3K-PKB pathway, possibly by inhibiting PKB activity. Down-regulates Fc-gamma-R-mediated phagocytosis in macrophages independently of INPP5D/SHIP1. In macrophages, down-regulates NF-kappa-B-dependent gene transcription by regulating macrophage colony-stimulating factor (M-CSF)-induced signaling. Plays a role in the localization of AURKA and NEDD9/HEF1 to the basolateral membrane at interphase in polarized cysts, thereby mediates cell cycle homeostasis, cell polarization and cilia assembly. Additionally promotion of cilia growth is also facilitated by hydrolysis of (PtdIns(3,4,5)P3) to PtdIns(3,4)P2. Promotes formation of apical membrane-initiation sites during the initial stages of lumen formation via Rho family-induced actin filament organization and CTNNB1 localization to cell-cell contacts. May also hydrolyze PtdIns(1,3,4,5)P4, and could thus affect the levels of the higher inositol polyphosphates like InsP6. Involved in endochondral ossification. The sequence is that of Phosphatidylinositol 3,4,5-trisphosphate 5-phosphatase 2 from Canis lupus familiaris (Dog).